The chain runs to 2947 residues: 3'-5' exoribonuclease HELZ2 (2947 aa).

The segment at 85–114 adopts a C3H1-type 1 zinc-finger fold; the sequence is PMRYQVCHYYRPGLGCRRHWNRCTFARSPE. The segment at 167-187 adopts a C2H2-type zinc-finger fold; it reads CFTCCPPCLCPVDPRGHCPKH. The C3H1-type 2 zinc-finger motif lies at 221–245; sequence YCMYVGRGVPCRHGASRCEYAHSAV. The segment at 289–311 adopts a C2H2-type; atypical zinc-finger fold; sequence CHACLVTCNSQEAFENHCSSLEH. A UvrD-like helicase ATP-binding domain is found at 769–1317; sequence VGLIAGRRPE…ELLDESQQVT (549 aa). Position 790–797 (790–797) interacts with ATP; the sequence is GPFGTGKT. Residues 809–1290 form an interaction with THRAP3 region; it reads QQPHTKVLIC…GGMSEEDSES (482 aa). Residues 913 to 916 carry the DEAA box motif; it reads DEAA. The tract at residues 1260 to 1292 is disordered; sequence EDTASGNSASRDAAAEVSTLEGGMSEEDSESDF. 4 consecutive short sequence motifs (LXXLL motif) follow at residues 1306 to 1310, 1348 to 1352, 1403 to 1407, and 2240 to 2244; these read LKELL, LWKFL, LVQIL, and LEGLP. Arg2381 is modified (omega-N-methylarginine). The interval 2413 to 2947 is interaction with THRAP3; it reads PEPCRGNWPR…RVQRKSALSS (535 aa). The UvrD-like helicase ATP-binding 2 domain occupies 2449–2726; the sequence is LNQSQDRAVR…IMLDTQYRMH (278 aa). 2470–2477 is an ATP binding site; it reads GPPGTGKT. The short motif at 2525-2529 is the LXXLL motif 5 element; it reads LGGLL.

This sequence belongs to the DNA2/NAM7 helicase family. Interacts with PPARA (via DNA-binding domain) and PPARG; the interaction stimulates the transcriptional activity of PPARA and PPARG. Interacts with THRAP3; the interaction is direct and HELZ2 and THRAP3 synergistically enhance the transcriptional activity of PPARG. It is probably part of the peroxisome proliferator activated receptor alpha interacting complex (PRIC).

The protein localises to the cytoplasm. The enzyme catalyses Exonucleolytic cleavage in the 3'- to 5'-direction to yield nucleoside 5'-phosphates.. It carries out the reaction ATP + H2O = ADP + phosphate + H(+). Functionally, can degrade highly structured RNAs through its concerted ATP-dependent RNA helicase and 3' to 5' exoribonuclease activities. Shows a strong preference for pyrimidine over purine residues for its nuclease activity. Acts as a transcriptional coactivator for a number of nuclear receptors including PPARA, PPARG, THRA, THRB and RXRA. This is 3'-5' exoribonuclease HELZ2 (Helz2) from Mus musculus (Mouse).